Consider the following 241-residue polypeptide: Large ribosomal subunit protein uL3 (241 aa).

The segment at 140–168 (SHRSIGSTGGRQDPGKTFKNKKMPGHMGD) is disordered. N5-methylglutamine is present on Gln-151.

Belongs to the universal ribosomal protein uL3 family. As to quaternary structure, part of the 50S ribosomal subunit. Forms a cluster with proteins L14 and L19. In terms of processing, methylated by PrmB.

One of the primary rRNA binding proteins, it binds directly near the 3'-end of the 23S rRNA, where it nucleates assembly of the 50S subunit. The chain is Large ribosomal subunit protein uL3 from Azorhizobium caulinodans (strain ATCC 43989 / DSM 5975 / JCM 20966 / LMG 6465 / NBRC 14845 / NCIMB 13405 / ORS 571).